A 379-amino-acid polypeptide reads, in one-letter code: Alcohol dehydrogenase 1 (379 aa).

The Zn(2+) site is built by C47, T49, H69, C99, C102, C105, C113, and C177. T49 and H69 together coordinate an alcohol. T49 is an NAD(+) binding site. NAD(+)-binding positions include 202-207 (GLGAVG), D226, R231, T272, V295, 295-297 (VGV), F322, and R372.

Belongs to the zinc-containing alcohol dehydrogenase family. As to quaternary structure, homodimer. The cofactor is Zn(2+).

The protein resides in the cytoplasm. The enzyme catalyses a primary alcohol + NAD(+) = an aldehyde + NADH + H(+). It carries out the reaction a secondary alcohol + NAD(+) = a ketone + NADH + H(+). The protein is Alcohol dehydrogenase 1 (ADH1) of Zea mays (Maize).